The following is a 465-amino-acid chain: MSFIRLHKDAAAMWLSRLLPAAIFILVGLFSIMVIRDYGRESAAARQTLLEKGNVLIRALESGTRVGMGMRMHHAQQQTLLEEMAGQPGVLWFAVTDAQGVIITHSNPGMVGKSLYSPSEMHQLNPGPQECWRRVDVAANGETVPALEIYRQFQPLFGMRGHGMRGHGMARSANDDEPAKQTIFIAFDASELAATQAREWRNTLIVLSALAAVLLATLLAFFWYQRYQRSHRELLDAMKRKEKLVAMGHLAAGVAHEIRNPLSSIKGLAKYFAERTPAGGESHELAQVMAKEADRLNRVVSELLELVKPAHLTLQAVNLNDIITHSLNLVSQDAQSREIQLRFTANETLKRIQADPDRLTQVLLNLYLNAIHAIGRQGTITVEAKESGTDRVIITVTDSGKGIAPDQLEAIFTPYFTTKADGTGLGLAVVQNIIEQHGGAIKVKSIEGKGAVFTIWLPVIARQQD.

The Cytoplasmic segment spans residues 1 to 14 (MSFIRLHKDAAAMW). A helical transmembrane segment spans residues 15-35 (LSRLLPAAIFILVGLFSIMVI). The Periplasmic portion of the chain corresponds to 36–203 (RDYGRESAAA…ATQAREWRNT (168 aa)). The chain crosses the membrane as a helical span at residues 204–224 (LIVLSALAAVLLATLLAFFWY). Topologically, residues 225 to 465 (QRYQRSHREL…WLPVIARQQD (241 aa)) are cytoplasmic. Residues 253-461 (GVAHEIRNPL…VFTIWLPVIA (209 aa)) enclose the Histidine kinase domain. His256 bears the Phosphohistidine; by autocatalysis mark.

In terms of processing, autophosphorylated.

It localises to the cell inner membrane. It carries out the reaction ATP + protein L-histidine = ADP + protein N-phospho-L-histidine.. Its activity is regulated as follows. Activity of the ZraS/ZraR two-component system is repressed by the zinc-bound form of ZraP, which probably interacts with the periplasmic region of ZraS. Its function is as follows. Part of the Zra signaling pathway, an envelope stress response (ESR) system composed of the periplasmic accessory protein ZraP, the histidine kinase ZraS and the transcriptional regulator ZraR. The ZraPSR system contributes to antibiotic resistance and is important for membrane integrity in the presence of membrane-targeting biocides. ZraS is a member of the two-component regulatory system ZraS/ZraR. Functions as a membrane-associated sensor kinase that phosphorylates ZraR in response to high concentrations of Zn(2+) or Pb(2+) in the medium. The polypeptide is Sensor histidine kinase ZraS (zraS) (Salmonella typhi).